A 369-amino-acid chain; its full sequence is DNA replication and repair protein RecF (369 aa).

30-37 (GPNGSGKT) contacts ATP.

This sequence belongs to the RecF family.

Its subcellular location is the cytoplasm. In terms of biological role, the RecF protein is involved in DNA metabolism; it is required for DNA replication and normal SOS inducibility. RecF binds preferentially to single-stranded, linear DNA. It also seems to bind ATP. The sequence is that of DNA replication and repair protein RecF from Chlorobium luteolum (strain DSM 273 / BCRC 81028 / 2530) (Pelodictyon luteolum).